Reading from the N-terminus, the 141-residue chain is MQGALFIKPTILLPLPSSVSSPKLTFLLPHATKASRLSSLRSNNSSSSSSLTSDPNTVDYNSSILSVFPAEACEVISGYACSADIYPEVKLDTKPVSRPVASEPVDREYEEYNSPKTVFREEACDDLGGEFCEPDFQKDAN.

The N-terminal 41 residues, methionine 1–arginine 41, are a transit peptide targeting the chloroplast. Positions serine 35–leucine 51 are enriched in low complexity. A disordered region spans residues serine 35–valine 58. The tract at residues valine 58 to cysteine 132 is 2 X 15 AA approximate repeats. Repeat copies occupy residues valine 67–cysteine 81 and valine 118–cysteine 132.

In terms of assembly, component of high molecular weight thylakoid LFNRs-containing protein complexes containing LIR1, LFNR1, LFNR2, TIC62 and TROL proteins. Interacts directly with LFNR1 and LFNR2; LIR1 increases the affinity of LFNR1 and LFNR2 for TIC62 and subsequent thylakoid relocalization. May form interchain disulfide bonds with LFNR1 and LFNR2.

It is found in the plastid. Its subcellular location is the chloroplast thylakoid membrane. The protein resides in the chloroplast envelope. It localises to the chloroplast stroma. In terms of biological role, thylakoid-determinant subunit of high molecular weight LFNRs-containing protein complexes. The sequence is that of Light-regulated protein 1, chloroplastic from Arabidopsis thaliana (Mouse-ear cress).